The chain runs to 73 residues: Translation initiation factor IF-1 (73 aa).

The region spanning Met1–Ile72 is the S1-like domain.

Belongs to the IF-1 family. In terms of assembly, component of the 30S ribosomal translation pre-initiation complex which assembles on the 30S ribosome in the order IF-2 and IF-3, IF-1 and N-formylmethionyl-tRNA(fMet); mRNA recruitment can occur at any time during PIC assembly.

It is found in the cytoplasm. Its function is as follows. One of the essential components for the initiation of protein synthesis. Stabilizes the binding of IF-2 and IF-3 on the 30S subunit to which N-formylmethionyl-tRNA(fMet) subsequently binds. Helps modulate mRNA selection, yielding the 30S pre-initiation complex (PIC). Upon addition of the 50S ribosomal subunit IF-1, IF-2 and IF-3 are released leaving the mature 70S translation initiation complex. In Lactobacillus acidophilus (strain ATCC 700396 / NCK56 / N2 / NCFM), this protein is Translation initiation factor IF-1.